The chain runs to 165 residues: Shikimate kinase (165 aa).

12–17 (GCGKST) lines the ATP pocket. Ser-16 contributes to the Mg(2+) binding site. Substrate is bound by residues Asp-34, Arg-57, and Gly-79. Position 116 (Arg-116) interacts with ATP. Arg-133 provides a ligand contact to substrate.

Belongs to the shikimate kinase family. As to quaternary structure, monomer. Mg(2+) serves as cofactor.

Its subcellular location is the cytoplasm. The enzyme catalyses shikimate + ATP = 3-phosphoshikimate + ADP + H(+). The protein operates within metabolic intermediate biosynthesis; chorismate biosynthesis; chorismate from D-erythrose 4-phosphate and phosphoenolpyruvate: step 5/7. Its function is as follows. Catalyzes the specific phosphorylation of the 3-hydroxyl group of shikimic acid using ATP as a cosubstrate. The sequence is that of Shikimate kinase from Clostridium botulinum (strain Eklund 17B / Type B).